Reading from the N-terminus, the 361-residue chain is MWVLTPAAFAGKLLSVFRQPLSSLWRSLVPLFCWLRATFWLLATKRRKQQLVLRGPDETKEEEEDPPLPTTPTSVNYHFTRQCNYKCGFCFHTAKTSFVLPLEEAKRGLLLLKEAGMEKINFSGGEPFLQDRGEYLGKLVRFCKVELRLPSVSIVSNGSLIRERWFQNYGEYLDILAISCDSFDEEVNVLIGRGQGKKNHVENLQKLRRWCRDYRVAFKINSVINRFNVEEDMTEQIKALNPVRWKVFQCLLIEGENCGEDALREAERFVIGDEEFERFLERHKEVSCLVPESNQKMKDSYLILDEYMRFLNCRKGRKDPSKSILDVGVEEAIKFSGFDEKMFLKRGGKYIWSKADLKLDW.

One can recognise a Radical SAM core domain in the interval 69-289; that stretch reads PTTPTSVNYH…LERHKEVSCL (221 aa). [4Fe-4S] cluster-binding residues include Cys-83, Cys-87, and Cys-90. The residue at position 197 (Lys-197) is an N6-acetyllysine. A Glycyl lysine isopeptide (Lys-Gly) (interchain with G-Cter in ubiquitin) cross-link involves residue Lys-206.

The protein belongs to the radical SAM superfamily. RSAD2 family. As to quaternary structure, homodimer. Interacts with IRAK1 and TRAF6. Interacts with FPPS. Interacts with HADHB. Interacts (via C-terminus) with VAPA/VAP33 (via C-terminus). (Microbial infection) Interacts with human cytomegalovirus/HHV-5 protein vMIA/UL37; this interaction results in RSAD2/viperin relocalization from the endoplasmic reticulum to the mitochondria. In terms of assembly, (Microbial infection) Interacts (via N-terminus) with enterovirus A71 protein 2C; this interaction inhibits viral replication. As to quaternary structure, (Microbial infection) Interacts with herpes simplex virus 1/HHV-1 glycoprotein D; this interaction inhibits HHV-1 replication by facilitating IRF7-mediated IFN-beta production. Requires [4Fe-4S] cluster as cofactor. Post-translationally, acetylated by HAT1. HAT1-mediated acetylation of Lys-197 in turn recruits UBE4A that stimulates RSAD2 polyubiquitination leading to proteasomal degradation. 'Lys-6'-linked polyubiquitination at Lys-206 leads to RSAD2 protein degradation.

The protein resides in the endoplasmic reticulum membrane. It localises to the golgi apparatus. It is found in the endoplasmic reticulum. The protein localises to the lipid droplet. Its subcellular location is the mitochondrion. The protein resides in the mitochondrion inner membrane. It localises to the mitochondrion outer membrane. It catalyses the reaction CTP + AH2 + S-adenosyl-L-methionine = 3'-deoxy-3',4'-didehydro-CTP + 5'-deoxyadenosine + L-methionine + A + H2O + H(+). Its activity is regulated as follows. IRAK1 and TRAF6 synergistically activate RSAD2 increasing its activity with CTP as substrate about 10-fold. Functionally, interferon-inducible antiviral protein which plays a major role in the cell antiviral state induced by type I and type II interferon. Catalyzes the conversion of cytidine triphosphate (CTP) to 3'-deoxy-3',4'-didehydro-CTP (ddhCTP) via a SAM-dependent radical mechanism. In turn, ddhCTP acts as a chain terminator for the RNA-dependent RNA polymerases from multiple viruses and directly inhibits viral replication. Therefore, inhibits a wide range of DNA and RNA viruses, including human cytomegalovirus (HCMV), hepatitis C virus (HCV), west Nile virus (WNV), dengue virus, sindbis virus, influenza A virus, sendai virus, vesicular stomatitis virus (VSV), zika virus, and human immunodeficiency virus (HIV-1). Also promotes TLR7 and TLR9-dependent production of IFN-beta production in plasmacytoid dendritic cells (pDCs) by facilitating 'Lys-63'-linked ubiquitination of IRAK1 by TRAF6. Plays a role in CD4+ T-cells activation and differentiation. Facilitates T-cell receptor (TCR)-mediated GATA3 activation and optimal T-helper 2 (Th2) cytokine production by modulating NFKB1 and JUNB activities. Can inhibit secretion of soluble proteins. The polypeptide is S-adenosylmethionine-dependent nucleotide dehydratase RSAD2 (Homo sapiens (Human)).